The primary structure comprises 1141 residues: DNA-directed RNA polymerase subunit beta (1141 aa).

Positions 1117 to 1141 (GINISREEPPGQLDDTPDTFSRGGM) are disordered.

The protein belongs to the RNA polymerase beta chain family. The RNAP catalytic core consists of 2 alpha, 1 beta, 1 beta' and 1 omega subunit. When a sigma factor is associated with the core the holoenzyme is formed, which can initiate transcription.

The catalysed reaction is RNA(n) + a ribonucleoside 5'-triphosphate = RNA(n+1) + diphosphate. Functionally, DNA-dependent RNA polymerase catalyzes the transcription of DNA into RNA using the four ribonucleoside triphosphates as substrates. This Rubrobacter xylanophilus (strain DSM 9941 / JCM 11954 / NBRC 16129 / PRD-1) protein is DNA-directed RNA polymerase subunit beta.